The following is a 454-amino-acid chain: Bleomycin hydrolase (454 aa).

N-acetylmethionine is present on Met1. Active-site residues include Cys73 and His372. Lys391 is subject to N6-acetyllysine. Asn396 is an active-site residue.

Belongs to the peptidase C1 family. Homohexamer. Interacts with NUDT12 (via ANK repeats). In terms of tissue distribution, expressed at relatively higher levels in the stomach, esophagus, spleen, thymus and testis, and at lower levels in the skin, lung and skeletal muscle.

It is found in the cytoplasm. The protein resides in the cytoplasmic granule. It catalyses the reaction Inactivates bleomycin B2 (a cytotoxic glycometallopeptide) by hydrolysis of a carboxyamide bond of beta-aminoalanine, but also shows general aminopeptidase activity. The specificity varies somewhat with source, but amino acid arylamides of Met, Leu and Ala are preferred.. The normal physiological role of BLM hydrolase is unknown, but it catalyzes the inactivation of the antitumor drug BLM (a glycopeptide) by hydrolyzing the carboxamide bond of its B-aminoalaninamide moiety thus protecting normal and malignant cells from BLM toxicity. Binds single-stranded DNA with higher affinity than double-stranded DNA. May play an important role in the metabolism of antibiotics. This Rattus norvegicus (Rat) protein is Bleomycin hydrolase (Blmh).